A 284-amino-acid polypeptide reads, in one-letter code: Tropomyosin beta chain (284 aa).

Residue Met1 is modified to N-acetylmethionine. Residues 1–65 form a disordered region; that stretch reads MDAIKKKMQM…EVEKYSESVK (65 aa). Positions 1–284 form a coiled coil; sequence MDAIKKKMQM…DNALNDITSL (284 aa). Basic and acidic residues-rich tracts occupy residues 12–40 and 51–65; these read KLDK…KQLE and KGTE…ESVK. Thr53 bears the Phosphothreonine mark. Ser61 bears the Phosphoserine; by PIK3CG mark. Residue Thr79 is modified to Phosphothreonine. At Ser87 the chain carries Phosphoserine. Thr108 bears the Phosphothreonine mark. Residues 117–136 are disordered; that stretch reads EKAADESERGMKVIENRAMK. A phosphoserine mark is found at Ser158, Ser206, and Ser215. The residue at position 252 (Thr252) is a Phosphothreonine. Tyr261 is modified (phosphotyrosine). Ser271 carries the phosphoserine modification. Thr282 carries the phosphothreonine modification. Ser283 carries the phosphoserine modification.

Belongs to the tropomyosin family. As to quaternary structure, homodimer. Heterodimer of an alpha (TPM1, TPM3 or TPM4) and a beta (TPM2) chain. Phosphorylated on Ser-61 by PIK3CG. Phosphorylation on Ser-61 is required for ADRB2 internalization. In terms of tissue distribution, present in primary breast cancer tissue, absent from normal breast tissue.

The protein localises to the cytoplasm. It localises to the cytoskeleton. Binds to actin filaments in muscle and non-muscle cells. Plays a central role, in association with the troponin complex, in the calcium dependent regulation of vertebrate striated muscle contraction. Smooth muscle contraction is regulated by interaction with caldesmon. In non-muscle cells is implicated in stabilizing cytoskeleton actin filaments. The non-muscle isoform may have a role in agonist-mediated receptor internalization. In Homo sapiens (Human), this protein is Tropomyosin beta chain (TPM2).